The chain runs to 201 residues: Large ribosomal subunit protein uL4 (201 aa).

A disordered region spans residues alanine 45–serine 72.

It belongs to the universal ribosomal protein uL4 family. As to quaternary structure, part of the 50S ribosomal subunit.

In terms of biological role, one of the primary rRNA binding proteins, this protein initially binds near the 5'-end of the 23S rRNA. It is important during the early stages of 50S assembly. It makes multiple contacts with different domains of the 23S rRNA in the assembled 50S subunit and ribosome. Its function is as follows. Forms part of the polypeptide exit tunnel. The polypeptide is Large ribosomal subunit protein uL4 (Shewanella baltica (strain OS223)).